The following is a 181-amino-acid chain: Adenylate kinase (181 aa).

10–15 (GAGKGT) is a binding site for ATP. Residues 30–59 (STGDLFRANIGEGTPLGIEAKQYIDAGKLV) form an NMP region. AMP contacts are provided by residues threonine 31, arginine 36, 57-59 (KLV), 85-88 (GFPR), and glutamine 92. The tract at residues 126–132 (SRGRADD) is LID. Residue arginine 127 coordinates ATP. Positions 129 and 140 each coordinate AMP. Glycine 166 provides a ligand contact to ATP.

Belongs to the adenylate kinase family. In terms of assembly, monomer.

The protein localises to the cytoplasm. The enzyme catalyses AMP + ATP = 2 ADP. It functions in the pathway purine metabolism; AMP biosynthesis via salvage pathway; AMP from ADP: step 1/1. Functionally, catalyzes the reversible transfer of the terminal phosphate group between ATP and AMP. Plays an important role in cellular energy homeostasis and in adenine nucleotide metabolism. This chain is Adenylate kinase, found in Corynebacterium glutamicum (strain R).